The following is a 400-amino-acid chain: Enoyl-[acyl-carrier-protein] reductase [NADH] (400 aa).

Residues 48–53, 74–75, 111–112, and 139–140 each bind NAD(+); these read GSSSGY, FE, DA, and LA. Tyr225 is a substrate binding site. Tyr235 acts as the Proton donor in catalysis. Residues Lys244 and 273–275 contribute to the NAD(+) site; that span reads VVT.

The protein belongs to the TER reductase family. Monomer.

The enzyme catalyses a 2,3-saturated acyl-[ACP] + NAD(+) = a (2E)-enoyl-[ACP] + NADH + H(+). The protein operates within lipid metabolism; fatty acid biosynthesis. Its function is as follows. Involved in the final reduction of the elongation cycle of fatty acid synthesis (FAS II). Catalyzes the reduction of a carbon-carbon double bond in an enoyl moiety that is covalently linked to an acyl carrier protein (ACP). This chain is Enoyl-[acyl-carrier-protein] reductase [NADH], found in Shewanella woodyi (strain ATCC 51908 / MS32).